The sequence spans 221 residues: Enolase-phosphatase E1 (221 aa).

Mg(2+)-binding residues include Asp9 and Glu11. Residues 116 to 117 (SS) and Lys152 each bind substrate. Asp180 contributes to the Mg(2+) binding site.

It belongs to the HAD-like hydrolase superfamily. MasA/MtnC family. Monomer. The cofactor is Mg(2+).

Its subcellular location is the cytoplasm. It is found in the nucleus. The enzyme catalyses 5-methylsulfanyl-2,3-dioxopentyl phosphate + H2O = 1,2-dihydroxy-5-(methylsulfanyl)pent-1-en-3-one + phosphate. It participates in amino-acid biosynthesis; L-methionine biosynthesis via salvage pathway; L-methionine from S-methyl-5-thio-alpha-D-ribose 1-phosphate: step 3/6. It functions in the pathway amino-acid biosynthesis; L-methionine biosynthesis via salvage pathway; L-methionine from S-methyl-5-thio-alpha-D-ribose 1-phosphate: step 4/6. In terms of biological role, bifunctional enzyme that catalyzes the enolization of 2,3-diketo-5-methylthiopentyl-1-phosphate (DK-MTP-1-P) into the intermediate 2-hydroxy-3-keto-5-methylthiopentenyl-1-phosphate (HK-MTPenyl-1-P), which is then dephosphorylated to form the acireductone 1,2-dihydroxy-3-keto-5-methylthiopentene (DHK-MTPene). This chain is Enolase-phosphatase E1, found in Kluyveromyces lactis (strain ATCC 8585 / CBS 2359 / DSM 70799 / NBRC 1267 / NRRL Y-1140 / WM37) (Yeast).